A 445-amino-acid polypeptide reads, in one-letter code: C4-dicarboxylate transport protein (445 aa).

The next 8 membrane-spanning stretches (helical) occupy residues 24-44 (VLYV…WLSP), 62-82 (LIKM…IAHI), 105-125 (FALV…GLAA), 163-183 (GDIL…MALG), 201-221 (FGVI…AMAF), 234-254 (LIGL…LVLG), 322-342 (IYMT…LSFG), and 370-390 (AGTL…VFSI).

The protein belongs to the dicarboxylate/amino acid:cation symporter (DAACS) (TC 2.A.23) family.

It is found in the cell inner membrane. Its function is as follows. Responsible for the transport of dicarboxylates such as succinate, fumarate, and malate from the periplasm across the membrane. The protein is C4-dicarboxylate transport protein of Rhodopseudomonas palustris (strain ATCC BAA-98 / CGA009).